Reading from the N-terminus, the 165-residue chain is MDALRLPRRLGVLLWKVVLLFVYAEDCRAQCGKDCRAYCCNGSTPHCCSYYAYIGSILSGTAIAGIVFGIVFIMGVIAGIAICICMCMKNNRGTRVGVIRAAHINAISYPMAPPPYTYDHETEYCTDLPPPYSPAPQASAQRSPPPPYPGNSRKYSSSQNRICNN.

The first 29 residues, 1-29 (MDALRLPRRLGVLLWKVVLLFVYAEDCRA), serve as a signal peptide directing secretion. At 30 to 61 (QCGKDCRAYCCNGSTPHCCSYYAYIGSILSGT) the chain is on the extracellular side. The helical transmembrane segment at 62 to 82 (AIAGIVFGIVFIMGVIAGIAI) threads the bilayer. Residues 83–165 (CICMCMKNNR…SSSQNRICNN (83 aa)) lie on the Cytoplasmic side of the membrane. Residues 127-165 (DLPPPYSPAPQASAQRSPPPPYPGNSRKYSSSQNRICNN) form a disordered region. A compositionally biased stretch (polar residues) spans 153–165 (RKYSSSQNRICNN).

Belongs to the CYYR1 family.

The protein localises to the membrane. The protein is Cysteine and tyrosine-rich protein 1 (Cyyr1) of Rattus norvegicus (Rat).